Reading from the N-terminus, the 411-residue chain is UPF0761 membrane protein PA14_51960 (411 aa).

A run of 6 helical transmembrane segments spans residues 36-56 (LFAV…IPAF), 92-112 (HLTW…LVTI), 132-152 (FLLY…GFAV), 174-194 (LLGL…YSAV), 207-229 (GGVF…VSLF), and 244-264 (IFLL…VLVC).

This sequence belongs to the UPF0761 family.

The protein localises to the cell inner membrane. The chain is UPF0761 membrane protein PA14_51960 from Pseudomonas aeruginosa (strain UCBPP-PA14).